A 600-amino-acid polypeptide reads, in one-letter code: Adenine deaminase (600 aa).

The protein belongs to the metallo-dependent hydrolases superfamily. Adenine deaminase family. It depends on Mn(2+) as a cofactor.

It carries out the reaction adenine + H2O + H(+) = hypoxanthine + NH4(+). The chain is Adenine deaminase from Bradyrhizobium sp. (strain BTAi1 / ATCC BAA-1182).